We begin with the raw amino-acid sequence, 173 residues long: Putative phosphoesterase GK0864 (173 aa).

H34 (proton donor) is an active-site residue. 2 consecutive short sequence motifs (HXTX) follow at residues H34 to L37 and H115 to I118. The Proton acceptor role is filled by H115.

Belongs to the 2H phosphoesterase superfamily. YjcG family.

This chain is Putative phosphoesterase GK0864, found in Geobacillus kaustophilus (strain HTA426).